A 1009-amino-acid polypeptide reads, in one-letter code: C2 domain-containing protein aex-1 (1009 aa).

In terms of domain architecture, C2 spans 812 to 945 (NAPHVDVHIS…ASEEKPTQRL (134 aa)).

This sequence belongs to the unc-13 family. As to expression, expressed in intestine, body wall muscles and some amphid neurons.

Its function is as follows. Involved in retrograde signaling from post-synaptic cells to pre-synaptic neurons, probably by regulating vesicle exocytosis in post-synaptic cells. Acts in muscles, to regulate the localization of synaptic vesicle fusion protein unc-13 likely during vesicle exocytosis and thus regulate retrograde signaling at the neuromuscular junction (NMJ). Regulates anterior body muscle contractions (aBOC) and the expulsion steps during the defecation motor program (DMP). Probably by regulating DMP, plays a homeostatic role in the uptake of triglycerides. Regulates locomotion. In Caenorhabditis elegans, this protein is C2 domain-containing protein aex-1.